We begin with the raw amino-acid sequence, 130 residues long: Small ribosomal subunit protein uS11 (130 aa).

It belongs to the universal ribosomal protein uS11 family. As to quaternary structure, part of the 30S ribosomal subunit. Interacts with proteins S7 and S18. Binds to IF-3.

Located on the platform of the 30S subunit, it bridges several disparate RNA helices of the 16S rRNA. Forms part of the Shine-Dalgarno cleft in the 70S ribosome. The sequence is that of Small ribosomal subunit protein uS11 from Synechococcus sp. (strain CC9902).